Consider the following 925-residue polypeptide: Translation initiation factor IF-2 (925 aa).

2 disordered regions span residues 52–84 and 98–326; these read GGGKAAEGAAKAPAKAAAKGDAKTAAKGDVKAP and AGGN…GVRL. The span at 57 to 68 shows a compositional bias: low complexity; sequence AEGAAKAPAKAA. A compositionally biased stretch (basic and acidic residues) spans 69–84; sequence AKGDAKTAAKGDVKAP. The span at 98 to 138 shows a compositional bias: low complexity; sequence AGGNGEAAAPPAQPGGTATTPAAQATPEAPARPGPAAARPS. Composition is skewed to pro residues over residues 139 to 169 and 193 to 207; these read APAPGQPKPPAPGQPPRPGATPGPRPGPAPK and PRPVPRPGAPRPGAP. Positions 236-296 are enriched in gly residues; it reads RPGGGRPGGP…GAAGAFGRPG (61 aa). Over residues 300-309 the composition is skewed to basic residues; it reads RRGRKSKRQK. One can recognise a tr-type G domain in the interval 421–592; that stretch reads TRPPVVTVMG…AVLLTADAAL (172 aa). Residues 430 to 437 are G1; it reads GHVDHGKT. A GTP-binding site is contributed by 430–437; the sequence is GHVDHGKT. The segment at 455–459 is G2; sequence GITQH. Residues 480-483 form a G3 region; it reads DTPG. GTP is bound by residues 480 to 484 and 534 to 537; these read DTPGH and NKID. The interval 534–537 is G4; the sequence is NKID. Residues 570–572 are G5; that stretch reads SAK.

This sequence belongs to the TRAFAC class translation factor GTPase superfamily. Classic translation factor GTPase family. IF-2 subfamily.

Its subcellular location is the cytoplasm. Functionally, one of the essential components for the initiation of protein synthesis. Protects formylmethionyl-tRNA from spontaneous hydrolysis and promotes its binding to the 30S ribosomal subunits. Also involved in the hydrolysis of GTP during the formation of the 70S ribosomal complex. The protein is Translation initiation factor IF-2 of Mycolicibacterium paratuberculosis (strain ATCC BAA-968 / K-10) (Mycobacterium paratuberculosis).